The primary structure comprises 394 residues: Na(+)/H(+) antiporter NhaA 2 (394 aa).

11 consecutive transmembrane segments (helical) span residues 13–33 (FGGVLLIIATILALLFQNGFL), 58–78 (LILWVNDGLMAIFFFVVGLEL), 93–113 (IALPTIGALGGVILPAVIFWA), 124–144 (GWAIPTATDIAFALGVLMLLG), 153–173 (IFLLTLAIIDDLCAIVIIAIF), 176–196 (TKLSFISFVIAGICLFALWVL), 208–228 (ILVTLILWVSVLKSGVHATIA), 260–280 (YFILPVFAFVNAGVSLAGVQI), 291–311 (IFFGLLIGKQVGVFLFSYIFI), 327–347 (FYGVCILTGIGFTMSLFVNSL), and 361–381 (LGILLASFTAGVIGYIYLLVF).

This sequence belongs to the NhaA Na(+)/H(+) (TC 2.A.33) antiporter family.

It is found in the cell inner membrane. It carries out the reaction Na(+)(in) + 2 H(+)(out) = Na(+)(out) + 2 H(+)(in). Na(+)/H(+) antiporter that extrudes sodium in exchange for external protons. The sequence is that of Na(+)/H(+) antiporter NhaA 2 from Campylobacter fetus subsp. fetus (strain 82-40).